Reading from the N-terminus, the 310-residue chain is Tagatose-6-phosphate kinase (310 aa).

The protein belongs to the carbohydrate kinase PfkB family. LacC subfamily.

It carries out the reaction D-tagatofuranose 6-phosphate + ATP = D-tagatofuranose 1,6-bisphosphate + ADP + H(+). Its pathway is carbohydrate metabolism; D-tagatose 6-phosphate degradation; D-glyceraldehyde 3-phosphate and glycerone phosphate from D-tagatose 6-phosphate: step 1/2. In Streptococcus agalactiae serotype Ia (strain ATCC 27591 / A909 / CDC SS700), this protein is Tagatose-6-phosphate kinase.